Here is a 200-residue protein sequence, read N- to C-terminus: Dephospho-CoA kinase (200 aa).

The DPCK domain maps to 6–200 (AIALSGGIAT…KIKAKYLEKK (195 aa)). Position 14 to 19 (14 to 19 (ATGKST)) interacts with ATP.

Belongs to the CoaE family.

The protein localises to the cytoplasm. It carries out the reaction 3'-dephospho-CoA + ATP = ADP + CoA + H(+). It functions in the pathway cofactor biosynthesis; coenzyme A biosynthesis; CoA from (R)-pantothenate: step 5/5. Its function is as follows. Catalyzes the phosphorylation of the 3'-hydroxyl group of dephosphocoenzyme A to form coenzyme A. This is Dephospho-CoA kinase from Sulfurimonas denitrificans (strain ATCC 33889 / DSM 1251) (Thiomicrospira denitrificans (strain ATCC 33889 / DSM 1251)).